We begin with the raw amino-acid sequence, 329 residues long: Urease accessory protein UreD 2 (329 aa).

The interval 100-120 (YSRPSDSSKFTNGTQSANSNT) is disordered. The segment covering 103-120 (PSDSSKFTNGTQSANSNT) has biased composition (polar residues).

This sequence belongs to the UreD family. In terms of assembly, ureD, UreF and UreG form a complex that acts as a GTP-hydrolysis-dependent molecular chaperone, activating the urease apoprotein by helping to assemble the nickel containing metallocenter of UreC. The UreE protein probably delivers the nickel.

The protein resides in the cytoplasm. In terms of biological role, required for maturation of urease via the functional incorporation of the urease nickel metallocenter. This Psychrobacter cryohalolentis (strain ATCC BAA-1226 / DSM 17306 / VKM B-2378 / K5) protein is Urease accessory protein UreD 2.